Consider the following 359-residue polypeptide: Mitochondrial glutathione transporter SLC25A39 (359 aa).

At 1–14 (MADQDPGGISPLQQ) the chain is on the mitochondrial intermembrane side. 3 Solcar repeats span residues 9 to 151 (ISPL…LKAF), 159 to 243 (SDLY…VKSW), and 253 to 347 (TSVG…GKNF). A helical transmembrane segment spans residues 15–35 (MVASGAGAVVTSLFMTPLDVV). Residues 36 to 121 (KVRLQSQRPS…VKIVRHEGTR (86 aa)) are Mitochondrial matrix-facing. [2Fe-2S] cluster is bound by residues Cys74, Cys78, Cys88, and Cys94. The chain crosses the membrane as a helical span at residues 122-142 (TLWSGLPATLVMTVPATAAYF). Residues 143–164 (TAYDQLKAFLCGRALTSDLYAP) lie on the Mitochondrial intermembrane side of the membrane. The helical transmembrane segment at 165 to 185 (MVAGALARLGTVTVISPLELV) threads the bilayer. Topologically, residues 186-214 (RTKLQAQHLSYRELGTCVRAAVAQGGWRS) are mitochondrial matrix. Residues 215-235 (LWLGWGPTALRDVPFSALYWF) traverse the membrane as a helical segment. The Mitochondrial intermembrane segment spans residues 236-255 (NYELVKSWLSGLRPKDQTSV). A helical membrane pass occupies residues 256–276 (GISFVAGGISGMVAATLTLPF). Residues 277–317 (DVVKTQRQVALGAVEALRVMPLNTDSTWLLLRRILAESGTR) are Mitochondrial matrix-facing. The chain crosses the membrane as a helical span at residues 318–338 (GLFAGFLPRIIKAAPSCAIMI). Residues 339–359 (STYEFGKNFFQRLNREQLLSP) lie on the Mitochondrial intermembrane side of the membrane.

Belongs to the mitochondrial carrier (TC 2.A.29) family. In terms of processing, cleaved and degraded by AFG3L2; degradation by AFG3L2 is regulated by the ability of SLC25A39 to bind iron-sulfur. In absence of mitochondrial glutathione, SLC25A39 binds iron-sulfur, preventing cleavage and degradation by AFG3L2. The presence of mitochondrial glutathione prevents iron-sulfur-binding to SLC25A39, promoting cleavage and degradation by AFG3L2.

The protein localises to the mitochondrion inner membrane. The catalysed reaction is glutathione(in) = glutathione(out). With respect to regulation, the activity of SLC25A39 is regulated by levels of mitochondrial glutathione via its ability to bind [2Fe-2S] iron-sulfur cluster. Upon physiological levels of mitochondrial glutathione, glutathione prevents iron-sulfur-binding to SLC25A39 promoting cleavage and degradation by AFG3L2. Upon depletion of mitochondrial glutathione, SLC25A39 binds iron-sulfur, preventing cleavage and degradation by AFG3L2. Its function is as follows. Mitochondrial transporter required for glutathione import into mitochondria. Glutathione, which plays key roles in oxidative metabolism, is produced exclusively in the cytosol and is imported in many organelles. Mitochondrial glutathione is required for the activity and stability of proteins containing iron-sulfur clusters, as well as erythropoiesis. The polypeptide is Mitochondrial glutathione transporter SLC25A39 (SLC25A39) (Bos taurus (Bovine)).